Consider the following 247-residue polypeptide: Adenosylcobinamide-GDP ribazoletransferase (247 aa).

6 consecutive transmembrane segments (helical) span residues 34–54, 59–79, 113–133, 138–158, 171–191, and 194–214; these read IVMF…IFIL, CGIP…TGGF, GGLA…ELAL, MLAA…LLMY, VFIG…AVIV, and VLLP…AIFI.

The protein belongs to the CobS family. Mg(2+) serves as cofactor.

Its subcellular location is the cell inner membrane. The catalysed reaction is alpha-ribazole + adenosylcob(III)inamide-GDP = adenosylcob(III)alamin + GMP + H(+). It carries out the reaction alpha-ribazole 5'-phosphate + adenosylcob(III)inamide-GDP = adenosylcob(III)alamin 5'-phosphate + GMP + H(+). Its pathway is cofactor biosynthesis; adenosylcobalamin biosynthesis; adenosylcobalamin from cob(II)yrinate a,c-diamide: step 7/7. Functionally, joins adenosylcobinamide-GDP and alpha-ribazole to generate adenosylcobalamin (Ado-cobalamin). Also synthesizes adenosylcobalamin 5'-phosphate from adenosylcobinamide-GDP and alpha-ribazole 5'-phosphate. The protein is Adenosylcobinamide-GDP ribazoletransferase of Salmonella paratyphi A (strain ATCC 9150 / SARB42).